We begin with the raw amino-acid sequence, 681 residues long: Amine oxidase [copper-containing] alpha 3, peroxisomal (681 aa).

323–334 (YLDCGDFGCGQC) contributes to the substrate binding site. Residue Asp325 is the Proton acceptor of the active site. A disulfide bond links Cys344 and Cys370. Substrate is bound at residue 410–415 (VGNYDY). Tyr413 serves as the catalytic Schiff-base intermediate with substrate; via topaquinone. The residue at position 413 (Tyr413) is a 2',4',5'-topaquinone. Cu cation-binding residues include His470 and His472. Mn(2+)-binding residues include Asp481, Asp621, and Ile622. His632 provides a ligand contact to Cu cation.

The protein belongs to the copper/topaquinone oxidase family. Post-translationally, topaquinone (TPQ) is generated by copper-dependent autoxidation of a specific tyrosyl residue. As to expression, mostly expressed in stems, and, at lower levels, in flowers and leaves. Mainly detectable in stipules, hypocotyls and roots.

The protein localises to the peroxisome. It carries out the reaction a primary methyl amine + O2 + H2O = an aldehyde + H2O2 + NH4(+). Its pathway is amine and polyamine degradation; putrescine degradation. Copper amine oxidase that can use putrescine and spermidine as substrates. Involved in putrescine catabolism in peroxisomes. This Arabidopsis thaliana (Mouse-ear cress) protein is Amine oxidase [copper-containing] alpha 3, peroxisomal.